A 1875-amino-acid chain; its full sequence is MLGSSVKSVQPEVELSGGSGSGGDEGADESRGASRKAAAADGRGMLPKRAKAAGGSGSMAKASAAELKVFKSGSVDSRVPGGLPTSNLRKQKSLTNLSFLTDSEKKLQLYEPEWSDDMAKAPKGLGKLGPKGRETPLMSKTLSKSEHSLFQPKGGSTGGAKTPLAPLAPSLGKPSRIPRGPYAEVKPLSKAPEAAVSDDGKSDDELLSSKAKAQKGSGTVPSAKGQEERAFLKVDPELVVTVLGDLEQLLFSQMLDPESQRKRTVQNVLDLRQNLEETMSSLRGSQVTHSSLEMPCYDSDDANPRSVSSLSNRSSPLSWRYGQSSPRLQAGDAPSVGGSCRSEGPPAWYMHGERAHYSHTMPMRSPSKLSHISRLELVESLDSDEVDLKSGYMSDSDLMGKTMTEDDDITTGWDESSSISSGLSDASDNLSSEEFNASSSLNSLPTTPTASRRSSTIVLRTDSEKRSLAESGLNWFSESEEKTPKKLEYDSGSLKMEPGTSKWRRERPESCDDASKGGELKKPISLGHPGSLKKGKTPPVAVTSPITHTAQSALKVAGKPEGKATDKGKLAVKNTGLQRSSSDAGRDRLSDAKKPPSGIARPSTSGSFGYKKPPPATGTATVMQTGSSATLSKIQKSSGIPVKPVNGRKTSLDVSNSVEPGFLAPGARSNIQYRSLPRPAKSSSMSVTGRGGPRPVSSSIDPSLLSTKQGGLTPSRLKEPSKVASGRSTPAPVNQTDREKEKAKAKAVALDSDNISLKSIGSPESTPKNQASHPPATKLAELPPTPLRATAKSFVKPPSLANLDKVNSNSLDLPSSSDTHASKVPDLHAPSSSTGGPLPSCFTPSPAPILNINSASFSQGLELMSGFSVPKETRMYPKLSGLHRSMESLQMPMSLPSAFPSSAPIPTPPTAPSEEDTEELPWSGSPRAGQLDSSQRDRNTLPKKGLRYQLQSQEETKERRHSHTAGGLPESDDQAELPSPPALSMSLSAKGQLTNIVSPTAATTPRITRSNSIPTHEAAFELYSGSQMGSTLSLAERPKGMIRSGSFRDPTDDVHGSVLSLASSASSTYSSAEERMQSEQIRKLRRELESSQEKVATLTSQLSANANLVAAFEQSLVNMTSRLRHLAETAEEKDTELLDLRETIDFLKKKNSEAQAVIQGALNASEATPKELRIKRQNSSDSISSLNSITSHSSIGSSKDADAKKKKKKSWVYELRSSFNKAFSIKKGPKSASSYSDIEEIATPDSSAPSSPKLQHGSTETASPSIKSSTSSSVGTEVTETPAHSVPHTRLFQANEEEEPEKKEVSELRSELWEKEMKLTDIRLEALNSAHQLDQLRETMHNMQLEVDLLKAENDRLKVAPGPSSGCTPGQVPGSSALSSPRRSLGLALSHPFSPSLTDTDLSPMDGISTCGSKEEVTLRVVVRMPPQHIIKGDLKQQEFFLGCSKVSGKVDWKMLDEAVFQVFKDYISKMDPASTLGLSTESIHGYSLSHVKRVLDAEPPEMPPCRRGVNNISVALKGLKEKCVDSLVFETLIPKPMMQHYISLLLKHRRLVLSGPSGTGKTYLTNRLAEYLVERSGREVTDGIVSTFNMHQQSCKDLQLYLSNLANQIDRETGIGDVPLVILLDDLSEAGSISELVNGALTCKYHKCPYIIGTTNQPVKMTPNHGLHLSFRMLTFSNNVEPANGFLVRYLRRKLVESDSDVNANKEELLRVLDWVPKLWYHLHTFLEKHSTSDFLIGPCFFLSCPIGIEDFRTWFIDLWNNSIIPYLQEGAKDGIKVHGQKAAWEDPVEWVRDTLPWPSAQQDQSKLYHLPPPSVGPHSTASPPEDRTVKDSTPNSLDSDPLMAMLLKLQEAANYIESPDRETILDPNLQATL.

Position 1 is an N-acetylmethionine (Met-1). A disordered region spans residues 1 to 63 (MLGSSVKSVQ…GGSGSMAKAS (63 aa)). Residues Ser-93 and Ser-145 each carry the phosphoserine modification. 2 disordered regions span residues 115–230 (SDDM…EERA) and 280–339 (SSLR…VGGS). At Thr-162 the chain carries Phosphothreonine. Phosphoserine occurs at positions 197 and 202. Residues 258–283 (ESQRKRTVQNVLDLRQNLEETMSSLR) are a coiled coil. The span at 280–291 (SSLRGSQVTHSS) shows a compositional bias: polar residues. Phosphoserine occurs at positions 299, 311, 315, 365, and 394. Positions 304-318 (PRSVSSLSNRSSPLS) are enriched in low complexity. Disordered stretches follow at residues 391–463 (GYMS…RTDS) and 477–783 (SESE…AELP). 2 stretches are compositionally biased toward low complexity: residues 414–428 (DESS…DASD) and 436–456 (NASS…RSST). Phosphoserine occurs at positions 455, 477, 479, and 493. Residues 479 to 489 (SEEKTPKKLEY) show a composition bias toward basic and acidic residues. Positions 506 to 522 (ERPESCDDASKGGELKK) are enriched in basic and acidic residues. Ser-531 is subject to Phosphoserine. Thr-537 carries the post-translational modification Phosphothreonine. A Phosphoserine modification is found at Ser-544. The residue at position 547 (Thr-547) is a Phosphothreonine. The segment covering 558 to 569 (GKPEGKATDKGK) has biased composition (basic and acidic residues). At Thr-575 the chain carries Phosphothreonine. Positions 584-594 (AGRDRLSDAKK) are enriched in basic and acidic residues. Polar residues-rich tracts occupy residues 618 to 638 (GTAT…QKSS) and 648 to 658 (RKTSLDVSNSV). Position 651 is a phosphoserine (Ser-651). Arg-690 is subject to Omega-N-methylarginine. 2 stretches are compositionally biased toward polar residues: residues 696–712 (VSSS…QGGL) and 726–735 (GRSTPAPVNQ). The stretch at 733–758 (VNQTDREKEKAKAKAVALDSDNISLK) forms a coiled coil. Phosphoserine is present on residues Ser-752, Ser-756, Ser-762, Ser-799, and Ser-810. Positions 753 to 772 (DNISLKSIGSPESTPKNQAS) are enriched in polar residues. Disordered stretches follow at residues 800–840 (LANL…PLPS) and 893–982 (MSLP…SPPA). 2 stretches are compositionally biased toward low complexity: residues 807–818 (NSNSLDLPSSSD) and 893–902 (MSLPSAFPSS). Ser-998 is subject to Phosphoserine. The residue at position 1004 (Thr-1004) is a Phosphothreonine. A coiled-coil region spans residues 1070-1161 (SSAEERMQSE…SEAQAVIQGA (92 aa)). Residue Thr-1168 is modified to Phosphothreonine. 4 disordered regions span residues 1172 to 1202 (LRIK…KDAD), 1242 to 1306 (ATPD…KEVS), 1359 to 1381 (VAPG…LSSP), and 1808 to 1841 (KLYH…SLDS). Ser-1179 carries the phosphoserine modification. Residues 1179 to 1198 (SSDSISSLNSITSHSSIGSS) are compositionally biased toward low complexity. Residues 1244–1259 (PDSSAPSSPKLQHGST) show a composition bias toward polar residues. Low complexity predominate over residues 1260–1281 (ETASPSIKSSTSSSVGTEVTET). Ser-1263 carries the phosphoserine modification. Residues 1301-1360 (EKKEVSELRSELWEKEMKLTDIRLEALNSAHQLDQLRETMHNMQLEVDLLKAENDRLKVA) are a coiled coil. The span at 1365–1381 (SGCTPGQVPGSSALSSP) shows a compositional bias: polar residues. A Phosphoserine modification is found at Ser-1380.

This sequence belongs to the Nav/unc-53 family. In terms of assembly, interacts with tubulin. In terms of tissue distribution, expressed in heart and brain. Present in brain (at protein level). In adult brain, found almost exclusively in areas of secondary neurogenesis from the hippocampus and the subventricular zone.

It is found in the cytoplasm. It localises to the cytoskeleton. In terms of biological role, may be involved in neuronal migration. This Mus musculus (Mouse) protein is Neuron navigator 1 (Nav1).